A 332-amino-acid chain; its full sequence is Chorismate synthase (332 aa).

Arg46 provides a ligand contact to NADP(+). Residues 123-125, Gly253, 268-272, and Arg295 contribute to the FMN site; these read HFS and KPTSS.

The protein belongs to the chorismate synthase family. In terms of assembly, homotetramer. The cofactor is FMNH2.

It catalyses the reaction 5-O-(1-carboxyvinyl)-3-phosphoshikimate = chorismate + phosphate. It participates in metabolic intermediate biosynthesis; chorismate biosynthesis; chorismate from D-erythrose 4-phosphate and phosphoenolpyruvate: step 7/7. Its function is as follows. Catalyzes the anti-1,4-elimination of the C-3 phosphate and the C-6 proR hydrogen from 5-enolpyruvylshikimate-3-phosphate (EPSP) to yield chorismate, which is the branch point compound that serves as the starting substrate for the three terminal pathways of aromatic amino acid biosynthesis. This reaction introduces a second double bond into the aromatic ring system. The chain is Chorismate synthase from Chitinophaga pinensis (strain ATCC 43595 / DSM 2588 / LMG 13176 / NBRC 15968 / NCIMB 11800 / UQM 2034).